The primary structure comprises 403 residues: NADH-quinone oxidoreductase subunit D (403 aa).

Belongs to the complex I 49 kDa subunit family. NDH-1 is composed of 14 different subunits. Subunits NuoB, C, D, E, F, and G constitute the peripheral sector of the complex.

It is found in the cell inner membrane. It catalyses the reaction a quinone + NADH + 5 H(+)(in) = a quinol + NAD(+) + 4 H(+)(out). In terms of biological role, NDH-1 shuttles electrons from NADH, via FMN and iron-sulfur (Fe-S) centers, to quinones in the respiratory chain. The immediate electron acceptor for the enzyme in this species is believed to be ubiquinone. Couples the redox reaction to proton translocation (for every two electrons transferred, four hydrogen ions are translocated across the cytoplasmic membrane), and thus conserves the redox energy in a proton gradient. This chain is NADH-quinone oxidoreductase subunit D, found in Pelobacter propionicus (strain DSM 2379 / NBRC 103807 / OttBd1).